The sequence spans 951 residues: Sodium/potassium exporting P-type ATPase 1 (951 aa).

Topologically, residues 1–57 (MMGANSTEWHGQSVEQVTELLGTDVERGLKESVVGQLQKQFGPNELKGQRGVNPWKV) are cytoplasmic. Residues 58–78 (LLAQFTNGLTVILLIATVVSF) form a helical membrane-spanning segment. The Extracellular portion of the chain corresponds to 79–82 (AVQD). Residues 83 to 103 (HAEGGVLAFVIIFNASVGFVQ) form a helical membrane-spanning segment. Residues 104 to 247 (EYRAEKTMDA…TPMQKRLNRM (144 aa)) are Cytoplasmic-facing. Residues 248–268 (AYILFGISLVLAVIVFAVNKF) traverse the membrane as a helical segment. Residues 269–273 (EFNTD) lie on the Extracellular side of the membrane. Residues 274–294 (IIIYAVSLGIAVIPEGLIAVI) traverse the membrane as a helical segment. Residues 295–717 (TIVMALGVRR…GRRIFSNIRK (423 aa)) are Cytoplasmic-facing. Asp330 acts as the 4-aspartylphosphate intermediate in catalysis. Mg(2+)-binding residues include Asp330 and Thr332. ATP contacts are provided by Thr332, Glu414, Lys467, Arg511, Thr575, Gly576, Asp577, Arg636, and Lys642. Mg(2+) is bound at residue Asp661. Asn664 contributes to the ATP binding site. Residues 718-738 (FILHLVSTNVGEVIVLIIGLA) form a helical membrane-spanning segment. Over 739-743 (FKDRN) the chain is Extracellular. The chain crosses the membrane as a helical span at residues 744-764 (GVSVFPLAPVQILFMNMVTST). The Cytoplasmic segment spans residues 765–799 (PPAMALGVEAASKDTMKVPPHTKGLFGKEVLADMM). A helical transmembrane segment spans residues 800 to 820 (VYGIIMGSLILVDWVLVIYAF). The Extracellular portion of the chain corresponds to 821 to 840 (GDSQLGLECNSDRMLNECNT). Residues 841–861 (VFRARSTIMVALIWMLLLHAY) traverse the membrane as a helical segment. At 862-885 (NCRHPRASLFTAEGGGASKLFSNR) the chain is on the cytoplasmic side. Residues 886-906 (LLVWSVLLGSLMPIPTVYIPT) form a helical membrane-spanning segment. At 907–916 (LNTKIFKQET) the chain is on the extracellular side. A helical transmembrane segment spans residues 917–937 (ISWEWSIVVVSVVAFFFLSEL). Topologically, residues 938–951 (YKLIKRNVMTSRVI) are cytoplasmic.

Belongs to the cation transport ATPase (P-type) (TC 3.A.3) family. Type IID subfamily. It depends on Mg(2+) as a cofactor. Post-translationally, the active site is phosphorylated in presence of sodium or potassium and in conditions of higher pH. Not phosphorylated in presence of calcium ions.

Its subcellular location is the cell membrane. The catalysed reaction is Na(+)(in) + ATP + H2O = Na(+)(out) + ADP + phosphate + H(+). It catalyses the reaction K(+)(in) + ATP + H2O = K(+)(out) + ADP + phosphate + H(+). In terms of biological role, catalyzes the hydrolysis of ATP coupled with the export of sodium and potassium from the cell. Appears to export potassium more efficiently than sodium. May transport other cations such as lithium. Sodium/potassium efflux ATPases are involved in salt tolerance and maintaining the membrane potential across the plasma membrane in high salinity (Na+) or alkaline (K+) environments. The sequence is that of Sodium/potassium exporting P-type ATPase 1 from Marchantia polymorpha (Common liverwort).